Here is a 208-residue protein sequence, read N- to C-terminus: Somatotropin-B (208 aa).

Residues 1 to 25 form the signal peptide; sequence MVPGSCSSFGLLVILSFQNVPDVGG. Residue histidine 44 coordinates Zn(2+). A disulfide bond links cysteine 77 and cysteine 181. Glutamate 190 is a binding site for Zn(2+). The cysteines at positions 198 and 206 are disulfide-linked.

Belongs to the somatotropin/prolactin family.

It is found in the secreted. In terms of biological role, growth hormone plays an important role in growth control. The sequence is that of Somatotropin-B (gh-b) from Xenopus laevis (African clawed frog).